The chain runs to 80 residues: DNA-directed RNA polymerase RPB10 homolog (80 aa).

The Zn(2+) site is built by Cys7, Cys10, Cys65, and Cys66.

Belongs to the archaeal RpoN/eukaryotic RPB10 RNA polymerase subunit family. In terms of assembly, part of the viral DNA-directed RNA polymerase that consists of 8 polII-like subunits (RPB1, RPB2, RPB3, RPB5, RPB6, RPB7, RPB9, RPB10), a capping enzyme and a termination factor.

It localises to the host cytoplasm. Component of the DNA-directed RNA polymerase (RNAP) that catalyzes the transcription in the cytoplasm of viral DNA into RNA using the four ribonucleoside triphosphates as substrates. In African swine fever virus (isolate Pig/Kenya/KEN-50/1950) (ASFV), this protein is DNA-directed RNA polymerase RPB10 homolog.